The sequence spans 474 residues: Citrate synthase 4, mitochondrial (474 aa).

The transit peptide at 1-16 directs the protein to the mitochondrion; sequence MVFFRSVSAFTRLRSR. Catalysis depends on residues histidine 308, histidine 354, and aspartate 409.

This sequence belongs to the citrate synthase family. In terms of assembly, homodimer.

The protein resides in the mitochondrion matrix. It catalyses the reaction oxaloacetate + acetyl-CoA + H2O = citrate + CoA + H(+). Its pathway is carbohydrate metabolism; tricarboxylic acid cycle; isocitrate from oxaloacetate: step 1/2. The polypeptide is Citrate synthase 4, mitochondrial (CSY4) (Arabidopsis thaliana (Mouse-ear cress)).